The chain runs to 78 residues: Chondrosarcoma-associated gene 1 protein (78 aa).

Residues 1–19 (MSATTACWPAFTVLGEARG) form the signal peptide. Positions 35–78 (KMSRKPRASSPFSNNHPSTPKRFPRQPRREKGPVKEVPGTKGSP) are disordered.

In terms of tissue distribution, expressed in chondrosarcoma, melanoma, cartilage and testis, but not in other normal tissues.

The protein resides in the cytoplasm. It localises to the cytoskeleton. Its subcellular location is the microtubule organizing center. It is found in the centrosome. The protein localises to the spindle pole. In terms of biological role, may play an important role in maintaining centrosome integrity during mitosis. This Homo sapiens (Human) protein is Chondrosarcoma-associated gene 1 protein.